Here is a 454-residue protein sequence, read N- to C-terminus: Bifunctional protein GlmU (454 aa).

Residues 1–225 are pyrophosphorylase; sequence MNIVILAAGM…IWETLGVNSK (225 aa). UDP-N-acetyl-alpha-D-glucosamine contacts are provided by residues 6–9, Lys20, Gln71, 76–77, 98–100, Gly135, Glu150, Asn165, and Asn223; these read LAAG, GT, and YGD. Mg(2+) is bound at residue Asp100. Asn223 is a binding site for Mg(2+). The linker stretch occupies residues 226–246; that stretch reads LQLAEVERIHQGNQARRLLEA. Residues 247–454 are N-acetyltransferase; that stretch reads GVTLLDPARI…WQRPVKQPKK (208 aa). Arg329 and Lys347 together coordinate UDP-N-acetyl-alpha-D-glucosamine. Catalysis depends on His359, which acts as the Proton acceptor. 2 residues coordinate UDP-N-acetyl-alpha-D-glucosamine: Tyr362 and Asn373. Acetyl-CoA contacts are provided by residues Ala376, 382–383, Ser401, Ala419, and Arg436; that span reads NY.

In the N-terminal section; belongs to the N-acetylglucosamine-1-phosphate uridyltransferase family. It in the C-terminal section; belongs to the transferase hexapeptide repeat family. As to quaternary structure, homotrimer. It depends on Mg(2+) as a cofactor.

The protein localises to the cytoplasm. The enzyme catalyses alpha-D-glucosamine 1-phosphate + acetyl-CoA = N-acetyl-alpha-D-glucosamine 1-phosphate + CoA + H(+). The catalysed reaction is N-acetyl-alpha-D-glucosamine 1-phosphate + UTP + H(+) = UDP-N-acetyl-alpha-D-glucosamine + diphosphate. The protein operates within nucleotide-sugar biosynthesis; UDP-N-acetyl-alpha-D-glucosamine biosynthesis; N-acetyl-alpha-D-glucosamine 1-phosphate from alpha-D-glucosamine 6-phosphate (route II): step 2/2. Its pathway is nucleotide-sugar biosynthesis; UDP-N-acetyl-alpha-D-glucosamine biosynthesis; UDP-N-acetyl-alpha-D-glucosamine from N-acetyl-alpha-D-glucosamine 1-phosphate: step 1/1. It functions in the pathway bacterial outer membrane biogenesis; LPS lipid A biosynthesis. Functionally, catalyzes the last two sequential reactions in the de novo biosynthetic pathway for UDP-N-acetylglucosamine (UDP-GlcNAc). The C-terminal domain catalyzes the transfer of acetyl group from acetyl coenzyme A to glucosamine-1-phosphate (GlcN-1-P) to produce N-acetylglucosamine-1-phosphate (GlcNAc-1-P), which is converted into UDP-GlcNAc by the transfer of uridine 5-monophosphate (from uridine 5-triphosphate), a reaction catalyzed by the N-terminal domain. This chain is Bifunctional protein GlmU, found in Cupriavidus necator (strain ATCC 17699 / DSM 428 / KCTC 22496 / NCIMB 10442 / H16 / Stanier 337) (Ralstonia eutropha).